The primary structure comprises 187 residues: Ribosome-recycling factor (187 aa).

The protein belongs to the RRF family.

The protein localises to the cytoplasm. Its function is as follows. Responsible for the release of ribosomes from messenger RNA at the termination of protein biosynthesis. May increase the efficiency of translation by recycling ribosomes from one round of translation to another. This Ruegeria sp. (strain TM1040) (Silicibacter sp.) protein is Ribosome-recycling factor.